The primary structure comprises 405 residues: Argininosuccinate synthase (405 aa).

Residue 9-17 (AYSGGLDTS) participates in ATP binding. Positions 87 and 92 each coordinate L-citrulline. An ATP-binding site is contributed by G117. L-aspartate contacts are provided by T119, N123, and D124. N123 contributes to the L-citrulline binding site. R127, S176, S185, E262, and Y274 together coordinate L-citrulline.

Belongs to the argininosuccinate synthase family. Type 1 subfamily. In terms of assembly, homotetramer.

Its subcellular location is the cytoplasm. The enzyme catalyses L-citrulline + L-aspartate + ATP = 2-(N(omega)-L-arginino)succinate + AMP + diphosphate + H(+). Its pathway is amino-acid biosynthesis; L-arginine biosynthesis; L-arginine from L-ornithine and carbamoyl phosphate: step 2/3. This Caldicellulosiruptor saccharolyticus (strain ATCC 43494 / DSM 8903 / Tp8T 6331) protein is Argininosuccinate synthase.